Here is a 1883-residue protein sequence, read N- to C-terminus: Transmembrane protein 131 (1883 aa).

Positions 1–22 (MGKRAGGGATGATTAAVSTSAG) are cleaved as a signal peptide. At 23-1117 (AGLEPAAARS…AEALPRPNWE (1095 aa)) the chain is on the lumenal side. Positions 109 to 283 (RFEPPMLDFH…ETKGVMRASF (175 aa)) are papD-L domain. N-linked (GlcNAc...) asparagine glycosylation occurs at N300. Position 803 is a phosphoserine (S803). Residues 1118–1138 (LALYIIISGIMSALFLLVIGT) traverse the membrane as a helical segment. Residues 1139–1883 (AYLEAQGIWE…WSNSHFPHEN (745 aa)) lie on the Cytoplasmic side of the membrane. 5 disordered regions span residues 1198 to 1580 (GAGG…DSLY), 1593 to 1656 (LKQR…KNGN), 1670 to 1712 (PGGN…PVSN), 1766 to 1789 (WESP…HTAT), and 1832 to 1858 (MGTE…TYNP). Positions 1237–1261 (AKNSSSTSSRTSAQAASSQSANKTS) are enriched in low complexity. Residues 1302–1316 (PQPPLPPPVPQPQEP) show a composition bias toward pro residues. Residues S1322 and S1342 each carry the phosphoserine modification. Basic and acidic residues-rich tracts occupy residues 1330 to 1343 (SHPE…HSSE) and 1353 to 1364 (AMDKDFDHHDSP). The residue at position 1375 (S1375) is a Phosphoserine. The segment covering 1380-1394 (SKGKGKPLQRKVKPP) has biased composition (basic residues). A compositionally biased stretch (basic and acidic residues) spans 1395–1417 (KKQEEKEKKGKGKPQEDELKDSL). Over residues 1423 to 1434 (SSTTTETSNPDT) the composition is skewed to low complexity. Positions 1436 to 1458 (PLLKEDTEKQKGKQAMPEKHESE) are enriched in basic and acidic residues. Polar residues-rich tracts occupy residues 1510–1526 (AMTS…TKGT) and 1542–1553 (PNSQELGNTSSS). Residues 1602-1611 (PASPSPPAAP) are compositionally biased toward pro residues. A compositionally biased stretch (low complexity) spans 1619–1630 (SYSSIVNSSSSS). The segment covering 1678 to 1690 (VSSNKTGFSSSLG) has biased composition (polar residues). Composition is skewed to low complexity over residues 1773–1784 (PSPSWPASSGSP) and 1837–1849 (SPAP…SSPA). S1863 and S1871 each carry phosphoserine.

It belongs to the TMEM131 family. Interacts (via PapD-L domain) with COL1A2 (via C-terminus); the interaction is direct, may occur with other collagen proteins, and is involved in assembly and TRAPPIII ER-to-Golgi transport complex-dependent secretion of collagen. Interacts (via C-terminus) with TRAPPC8 (via C-terminus); the interaction is direct.

Its subcellular location is the membrane. Its function is as follows. Collagen binding transmembrane protein involved in collagen secretion by recruiting the ER-to-Golgi transport complex TRAPPIII. May play a role in the immune response to viral infection. This is Transmembrane protein 131 from Homo sapiens (Human).